A 122-amino-acid polypeptide reads, in one-letter code: Neutral phospholipase A2 agkistrodotoxin (122 aa).

7 disulfide bridges follow: Cys-26–Cys-115, Cys-28–Cys-44, Cys-43–Cys-95, Cys-49–Cys-122, Cys-50–Cys-88, Cys-57–Cys-81, and Cys-75–Cys-86. Tyr-27, Gly-29, and Gly-31 together coordinate Ca(2+). His-47 is an active-site residue. Asp-48 contributes to the Ca(2+) binding site. Asp-89 is a catalytic residue.

Ca(2+) is required as a cofactor. Expressed by the venom gland.

The protein resides in the secreted. It catalyses the reaction a 1,2-diacyl-sn-glycero-3-phosphocholine + H2O = a 1-acyl-sn-glycero-3-phosphocholine + a fatty acid + H(+). Functionally, snake venom phospholipase A2 (PLA2) that inhibits neuromuscular transmission by blocking acetylcholine release from the nerve termini. PLA2 catalyzes the calcium-dependent hydrolysis of the 2-acyl groups in 3-sn-phosphoglycerides. The polypeptide is Neutral phospholipase A2 agkistrodotoxin (Gloydius halys (Chinese water mocassin)).